The following is a 420-amino-acid chain: MTLLALGINHKTAPVALREKVSFSPDTMGDALNNLLQQPAVRGGVVLSTCNRTELYLSLEDKENSHEQLISWLCQYHQIEPHELKNSVYWHQDNQAVSHLMRVASGLDSLVLGEPQILGQVKKAFADSQNYHSLSSELERLFQKSFSVAKRVRTETQIGANAVSVAFAACTLARQIFESLSSLTILLVGAGETIELVARHLREHQVKKIIIANRTKERAQRLANEVDAEVITLSDIDESLSQADIVISSTASPLPIIGKGMVERALKKRRNQPMLLVDIAVPRDIEQDIEKLSNVYLYSVDDLEAIIQHNREQRQAAAIEAEHIVQQESGQFMDWLRAQGAVGAIREYRDSAEMLRAEMAEKAIALIQNGADAEKVIQQLSHQLMNRLIHTPTKSLQQAASDGDIERLNLLRESLGITHN.

Residues 49–52 (TCNR), Ser109, 114–116 (EPQ), and Gln120 each bind substrate. Cys50 functions as the Nucleophile in the catalytic mechanism. 189–194 (GAGETI) lines the NADP(+) pocket.

The protein belongs to the glutamyl-tRNA reductase family. As to quaternary structure, homodimer.

It carries out the reaction (S)-4-amino-5-oxopentanoate + tRNA(Glu) + NADP(+) = L-glutamyl-tRNA(Glu) + NADPH + H(+). The protein operates within porphyrin-containing compound metabolism; protoporphyrin-IX biosynthesis; 5-aminolevulinate from L-glutamyl-tRNA(Glu): step 1/2. In terms of biological role, catalyzes the NADPH-dependent reduction of glutamyl-tRNA(Glu) to glutamate 1-semialdehyde (GSA). This is Glutamyl-tRNA reductase from Proteus mirabilis (strain HI4320).